A 394-amino-acid polypeptide reads, in one-letter code: NAD(P)H-quinone oxidoreductase subunit H (394 aa).

It belongs to the complex I 49 kDa subunit family. In terms of assembly, NDH-1 can be composed of about 15 different subunits; different subcomplexes with different compositions have been identified which probably have different functions.

The protein resides in the cellular thylakoid membrane. It carries out the reaction a plastoquinone + NADH + (n+1) H(+)(in) = a plastoquinol + NAD(+) + n H(+)(out). It catalyses the reaction a plastoquinone + NADPH + (n+1) H(+)(in) = a plastoquinol + NADP(+) + n H(+)(out). NDH-1 shuttles electrons from an unknown electron donor, via FMN and iron-sulfur (Fe-S) centers, to quinones in the respiratory and/or the photosynthetic chain. The immediate electron acceptor for the enzyme in this species is believed to be plastoquinone. Couples the redox reaction to proton translocation, and thus conserves the redox energy in a proton gradient. Cyanobacterial NDH-1 also plays a role in inorganic carbon-concentration. The polypeptide is NAD(P)H-quinone oxidoreductase subunit H (Synechococcus sp. (strain RCC307)).